We begin with the raw amino-acid sequence, 222 residues long: Octanoyltransferase (222 aa).

One can recognise a BPL/LPL catalytic domain in the interval 34–214; that stretch reads AEAPSTVLLL…EFRKHEEALV (181 aa). Residues 72–79, 144–146, and 157–159 contribute to the substrate site; these read RGGKLTWH, AIG, and GIA. The active-site Acyl-thioester intermediate is the Cys-175.

Belongs to the LipB family.

Its subcellular location is the cytoplasm. The catalysed reaction is octanoyl-[ACP] + L-lysyl-[protein] = N(6)-octanoyl-L-lysyl-[protein] + holo-[ACP] + H(+). It participates in protein modification; protein lipoylation via endogenous pathway; protein N(6)-(lipoyl)lysine from octanoyl-[acyl-carrier-protein]: step 1/2. Functionally, catalyzes the transfer of endogenously produced octanoic acid from octanoyl-acyl-carrier-protein onto the lipoyl domains of lipoate-dependent enzymes. Lipoyl-ACP can also act as a substrate although octanoyl-ACP is likely to be the physiological substrate. This Arthrobacter sp. (strain FB24) protein is Octanoyltransferase.